The sequence spans 234 residues: Thiamine import ATP-binding protein ThiQ (234 aa).

In terms of domain architecture, ABC transporter spans Leu-2 to Val-230. Residue Gly-32 to Ser-39 coordinates ATP.

The protein belongs to the ABC transporter superfamily. Thiamine importer (TC 3.A.1.19.1) family. As to quaternary structure, the complex is composed of two ATP-binding proteins (ThiQ), two transmembrane proteins (ThiP) and a solute-binding protein (ThiB).

It localises to the cell inner membrane. The enzyme catalyses thiamine(out) + ATP + H2O = thiamine(in) + ADP + phosphate + H(+). In terms of biological role, part of the ABC transporter complex ThiBPQ involved in thiamine import. Responsible for energy coupling to the transport system. The chain is Thiamine import ATP-binding protein ThiQ from Vibrio parahaemolyticus serotype O3:K6 (strain RIMD 2210633).